The sequence spans 981 residues: Bifunctional glutamine synthetase adenylyltransferase/adenylyl-removing enzyme (981 aa).

Residues 1 to 473 (MTMPLPSIEQ…RSVFNNLIGF (473 aa)) form an adenylyl removase region. An adenylyl transferase region spans residues 479–981 (ADDSDNAWSD…HQIWQKLFFE (503 aa)).

Belongs to the GlnE family. It depends on Mg(2+) as a cofactor.

The catalysed reaction is [glutamine synthetase]-O(4)-(5'-adenylyl)-L-tyrosine + phosphate = [glutamine synthetase]-L-tyrosine + ADP. It carries out the reaction [glutamine synthetase]-L-tyrosine + ATP = [glutamine synthetase]-O(4)-(5'-adenylyl)-L-tyrosine + diphosphate. Its function is as follows. Involved in the regulation of glutamine synthetase GlnA, a key enzyme in the process to assimilate ammonia. When cellular nitrogen levels are high, the C-terminal adenylyl transferase (AT) inactivates GlnA by covalent transfer of an adenylyl group from ATP to specific tyrosine residue of GlnA, thus reducing its activity. Conversely, when nitrogen levels are low, the N-terminal adenylyl removase (AR) activates GlnA by removing the adenylyl group by phosphorolysis, increasing its activity. The regulatory region of GlnE binds the signal transduction protein PII (GlnB) which indicates the nitrogen status of the cell. This is Bifunctional glutamine synthetase adenylyltransferase/adenylyl-removing enzyme from Mannheimia succiniciproducens (strain KCTC 0769BP / MBEL55E).